A 377-amino-acid chain; its full sequence is MNTFVYLLFMMAVGALIGGMTNFIAIVMLFRPYEPIYIFGKRLPLTPGLIPKRRRELAEQLGKTVVEHLVTPEGLRRKLTDPVFVAEVADWGREWLKRWLSRRETPAQLLERLGVHAPDEWLSELAAKQAGRAYEQWSETWRLRPIRDLLSPELKETMESRIESLADYLADRVIDYFSSEEGKRQIAGMIDRFFQERGMVGGMMQMLLGNVNFVDKVQSELGKFLRHAGTRAMLARLLWTEWNKWISYPLAAVEEMIGRQRIKETVSAAARGLVRNNDWLDRPLAELIAPYERELFDRFVPQAANAAIHALSDKIEGIVGKLGLADIVRNQVESFSLRRLEVIILSIARRELKMITYLGALLGAMIGAVQGIIGLWL.

2 helical membrane-spanning segments follow: residues 7–27 and 357–377; these read LLFMMAVGALIGGMTNFIAIV and YLGALLGAMIGAVQGIIGLWL.

The protein belongs to the UPF0754 family.

It is found in the cell membrane. This chain is UPF0754 membrane protein GTNG_0550, found in Geobacillus thermodenitrificans (strain NG80-2).